We begin with the raw amino-acid sequence, 119 residues long: gSG7 salivary protein (119 aa).

2 disulfides stabilise this stretch: cysteine 58/cysteine 113 and cysteine 81/cysteine 91.

The protein localises to the secreted. Its activity is regulated as follows. The activity is increased in the presence of host properdin (CFP). Salivary protein that inhibits the alternative pathway of complement system activation in the host while having no inhibitory effect on the classical pathway. Inhibits activity of activated host C3-convertase complex C3bBb (C3-CFB). Enhances accumulation of C3bBb on immobilized properdin. The chain is gSG7 salivary protein from Anopheles freeborni (Western malaria mosquito).